Consider the following 314-residue polypeptide: Ribonuclease Z (314 aa).

7 residues coordinate Zn(2+): His-62, His-64, Asp-66, His-67, His-144, Asp-215, and His-273. The Proton acceptor role is filled by Asp-66.

Belongs to the RNase Z family. As to quaternary structure, homodimer. Zn(2+) is required as a cofactor.

It carries out the reaction Endonucleolytic cleavage of RNA, removing extra 3' nucleotides from tRNA precursor, generating 3' termini of tRNAs. A 3'-hydroxy group is left at the tRNA terminus and a 5'-phosphoryl group is left at the trailer molecule.. Zinc phosphodiesterase, which displays some tRNA 3'-processing endonuclease activity. Probably involved in tRNA maturation, by removing a 3'-trailer from precursor tRNA. The protein is Ribonuclease Z of Prochlorococcus marinus (strain NATL1A).